We begin with the raw amino-acid sequence, 1486 residues long: Phosphatidylinositol 3-kinase C2 domain-containing subunit gamma (1486 aa).

The 87-residue stretch at Lys285–Glu371 folds into the PI3K-RBD domain. Residues Leu521–Pro669 enclose the C2 PI3K-type domain. One can recognise a PIK helical domain in the interval Arg684–Cys860. A PI3K/PI4K catalytic domain is found at Asp929–Pro1207. Positions Tyr935–Leu941 are G-loop. Residues Gly1071–Asn1079 are catalytic loop. Residues His1090 to Thr1116 form an activation loop region. The PX domain occupies Leu1240 to Gln1352. The C2 domain maps to Lys1369–Ile1486.

Belongs to the PI3/PI4-kinase family. In terms of tissue distribution, highly expressed in liver, prostate and testis. Lower levels in small intestine, kidney and pancreas.

The protein resides in the membrane. It catalyses the reaction a 1,2-diacyl-sn-glycero-3-phospho-(1D-myo-inositol 4-phosphate) + ATP = a 1,2-diacyl-sn-glycero-3-phospho-(1D-myo-inositol-3,4-bisphosphate) + ADP + H(+). The enzyme catalyses a 1,2-diacyl-sn-glycero-3-phospho-(1D-myo-inositol) + ATP = a 1,2-diacyl-sn-glycero-3-phospho-(1D-myo-inositol-3-phosphate) + ADP + H(+). Its function is as follows. Generates phosphatidylinositol 3-phosphate (PtdIns3P) and phosphatidylinositol 3,4-bisphosphate (PtdIns(3,4)P2) that act as second messengers. May play a role in SDF1A-stimulated chemotaxis. The chain is Phosphatidylinositol 3-kinase C2 domain-containing subunit gamma (PIK3C2G) from Homo sapiens (Human).